Here is a 381-residue protein sequence, read N- to C-terminus: MESIGVVAPHTMHFAEPLRLQSGSVLGNYQLVVETYGELNAVRSNAVLVCHALNASHHVAGVYADDPRSTGWWDNMVGPGKPLDTNRFFVIGVNNLGSCFGSTGPMNIDPATGTPYGARFPVVTVEDWVHAQARVADALGIERFAAVMGGSLGGMQALAWSLLYPERVAHCIDIASTPKLSAQNIAFNEVARSAILSDPDFHGGDYYAHGVKPRRGLRVARMIGHITYLSDDDMAEKFGRALRRADGALDAYNFNFDVEFEVESYLRYQGDKFADYFDANTYLLITRALDYFDPAKAFNGDLSAALAHTKAKYLIASFMTDWRFAPARSREIVKALLDNRRSVSYAEIDAPHGHDAFLLDDARYHNLVRAYYERIAEEVGA.

Residues 45–360 enclose the AB hydrolase-1 domain; that stretch reads NAVLVCHALN…PHGHDAFLLD (316 aa). S151 acts as the Nucleophile in catalysis. Position 221 (R221) interacts with substrate. Active-site residues include D321 and H354. Residue D355 coordinates substrate.

The protein belongs to the AB hydrolase superfamily. MetX family. In terms of assembly, homodimer.

The protein resides in the cytoplasm. It carries out the reaction L-homoserine + succinyl-CoA = O-succinyl-L-homoserine + CoA. The protein operates within amino-acid biosynthesis; L-methionine biosynthesis via de novo pathway; O-succinyl-L-homoserine from L-homoserine: step 1/1. Functionally, transfers a succinyl group from succinyl-CoA to L-homoserine, forming succinyl-L-homoserine. In Burkholderia pseudomallei (strain 1710b), this protein is Homoserine O-succinyltransferase.